Reading from the N-terminus, the 328-residue chain is G2/mitotic-specific cyclin-2 (328 aa).

This sequence belongs to the cyclin family. Cyclin AB subfamily. As to quaternary structure, interacts with the CDC2 protein kinase to form a serine/threonine kinase holoenzyme complex also known as maturation promoting factor (MPF). The cyclin subunit imparts substrate specificity to the complex. Only expressed in organs with dividing cells.

In terms of biological role, essential for the control of the cell cycle at the G2/M (mitosis) transition. This chain is G2/mitotic-specific cyclin-2, found in Medicago sativa (Alfalfa).